A 1651-amino-acid chain; its full sequence is Alsin (1651 aa).

RCC1 repeat units follow at residues 59–108, 109–167, and 169–218; these read DGEV…AVTE, SGVV…ALSL, and REIW…ALVQ. The interval 425–462 is disordered; that stretch reads ETAAQSGSASTGPESLKDLREEQVKQESLQGKKSSSLM. Over residues 427-437 the composition is skewed to polar residues; sequence AAQSGSASTGP. Over residues 439 to 449 the composition is skewed to basic and acidic residues; the sequence is SLKDLREEQVK. The segment covering 450-461 has biased composition (polar residues); sequence QESLQGKKSSSL. A phosphoserine mark is found at S459, S460, S477, and S486. A Phosphothreonine modification is found at T504. RCC1 repeat units lie at residues 519-570 and 572-621; these read RTEV…ALTA and SQVY…FLVD. N6-acetyllysine is present on K527. The DH domain maps to 684-879; sequence GYIASLHELA…ESLALHLGKK (196 aa). Residues 895 to 1001 enclose the PH domain; sequence GKMTDSLRKP…RAISQAVDQA (107 aa). MORN repeat units follow at residues 1043–1065, 1066–1088, 1094–1116, 1117–1139, 1145–1167, 1169–1191, 1192–1214, and 1215–1238; these read YDGR…DGKM, YSGM…NKAL, YVGH…SGEV, FEGC…KLTS, FIGQ…TRGE, YMGM…FGLY, YEGN…DDTI, and YEGE…HGDY. Residue S1329 is modified to Phosphoserine. The region spanning 1507–1651 is the VPS9 domain; the sequence is KQPDIALLGF…YFQIQREKLN (145 aa).

In terms of assembly, forms a heteromeric complex with ALS2CL. Interacts with ALS2CL.

Functionally, may act as a GTPase regulator. Controls survival and growth of spinal motoneurons. The chain is Alsin (Als2) from Mus musculus (Mouse).